A 183-amino-acid chain; its full sequence is V-type ATP synthase subunit E (183 aa).

It belongs to the V-ATPase E subunit family.

Its function is as follows. Produces ATP from ADP in the presence of a proton gradient across the membrane. The protein is V-type ATP synthase subunit E of Fusobacterium nucleatum subsp. nucleatum (strain ATCC 25586 / DSM 15643 / BCRC 10681 / CIP 101130 / JCM 8532 / KCTC 2640 / LMG 13131 / VPI 4355).